The following is an 818-amino-acid chain: MKKQFNRMRQLANQTVGRAEKTEVLSEDLLQVEKRLELVKQVSHSTHKKLTACLQGQQGAEADKRSKKLPLTTLAQCLMEGSAILGDDTLLGKMLKLCGETEDKLAQELIHFELQVERDVIEPLFLLAEVEIPNIQKQRKHLAKLVLDMDSSRTRWQQTSKSSGLSSSLQPAGAKADALREEMEEAANRVEICRDQLSADMYSFVAKEIDYANYFQTLIEVQAEYHRKSLTLLQAVLPQIKAQQEAWVEKPSFGKPLEEHLTISGREIAFPIEACVTMLLECGMQEEGLFRVAPSASKLKKLKAALDCCVVDVQEYSADPHAIAGALKSYLRELPEPLMTFELYDEWIQASNVQEQDKKLQALWNACEKLPKANHNNIRYLIKFLSKLSEYQDVNKMTPSNMAIVLGPNLLWPQAEGNITEMMTTVSLQIVGIIEPIIQHADWFFPGEIEFNITGNYGSPVHVNHNANYSSMPSPDMDPADRRQPEQARRPLSVATDNMMLEFYKKDGLRKIQSMGVRVMDTNWVARRGSSAGRKVSCAPPSMQPPAPPAELAAPLPSPLPEQPLDSPAAPALSPSGLGLQPGPERTSTTKSKELSPGSAQKGSPGSSQGTACAGTQPGAQPGAQPGASPSPSQPPADQSPHTLRKVSKKLAPIPPKVPFGQPGAMADQSAGQPSPVSLSPTPPSTPSPYGLSYPQGYSLASGQLSPAAAPPLASPSVFTSTLSKSRPTPKPRQRPTLPPPQPPTVNLSASSPQSTEAPMLDGMSPGESMSTDLVHFDIPSIHIELGSTLRLSPLEHMRRHSVTDKRDSEEESESTAL.

One can recognise a BAR domain in the interval 14-249 (QTVGRAEKTE…IKAQQEAWVE (236 aa)). Positions 255-445 (KPLEEHLTIS…PIIQHADWFF (191 aa)) constitute a Rho-GAP domain. 3 disordered regions span residues 467-493 (ANYS…RPLS), 530-772 (SSAG…SMST), and 789-818 (TLRL…STAL). Basic and acidic residues predominate over residues 479–489 (PADRRQPEQAR). Phosphoserine is present on S493. Over residues 563 to 579 (QPLDSPAAPALSPSGLG) the composition is skewed to low complexity. The span at 598-611 (GSAQKGSPGSSQGT) shows a compositional bias: polar residues. 2 stretches are compositionally biased toward low complexity: residues 614–641 (AGTQ…DQSP) and 688–708 (SPYG…LSPA). The segment at 731–818 (KPRQRPTLPP…SEEESESTAL (88 aa)) is interaction with BST2. The span at 746 to 757 (VNLSASSPQSTE) shows a compositional bias: polar residues. A PDZ-binding motif is present at residues 764-767 (MSPG). The segment covering 794–809 (PLEHMRRHSVTDKRDS) has biased composition (basic and acidic residues). S809 is subject to Phosphoserine. Residues 815-818 (STAL) carry the PDZ-binding motif.

Interacts with BST2 (via cytoplasmic domain). Interacts (probably via PDZ-binding motif) with SHANK3 (via PDZ domain); the interaction takes place in dendritic spines and promotes GRIA1 exocytosis. As to expression, highly expressed in brain. Expressed at weak level in other tissues.

It is found in the cell projection. It localises to the dendritic spine. The protein resides in the recycling endosome. Its subcellular location is the presynapse. The protein localises to the dendrite. Functionally, GTPase-activating protein (GAP) that stimulates the GTPase activity of Rho-type GTPases. Thereby, controls Rho-type GTPases cycling between their active GTP-bound and inactive GDP-bound states. Acts as a GAP at least for CDC42 and RAC1. In neurons, is involved in dendritic spine formation and synaptic plasticity in a specific RAC1-GAP activity. Limits the initiation of exploratory dendritic filopodia. Recruited to actin-patches that seed filopodia, binds specifically to plasma membrane sections that are deformed inward by acto-myosin mediated contractile forces. Acts through GAP activity on RAC1 to reduce actin polymerization necessary for filopodia formation. In association with SHANK3, promotes GRIA1 exocytosis from recycling endosomes and spine morphological changes associated to long-term potentiation. The polypeptide is Rho GTPase-activating protein 44 (Homo sapiens (Human)).